Here is a 389-residue protein sequence, read N- to C-terminus: uncharacterized protein (389 aa).

4 disordered regions span residues 119-156, 180-233, 294-321, and 362-389; these read SSLF…GENQ, PTSK…SSMG, SIPS…TSRT, and PEDM…EIKV. A compositionally biased stretch (polar residues) spans 137 to 155; it reads SPSTINIEKNRHSSNSGEN. Over residues 190 to 204 the composition is skewed to acidic residues; the sequence is DDGDEEDDTDDEGEA.

This is an uncharacterized protein from Caenorhabditis elegans.